The primary structure comprises 185 residues: Large ribosomal subunit protein uL13 (185 aa).

Belongs to the universal ribosomal protein uL13 family. As to quaternary structure, part of the 50S ribosomal subunit.

Its function is as follows. This protein is one of the early assembly proteins of the 50S ribosomal subunit, although it is not seen to bind rRNA by itself. It is important during the early stages of 50S assembly. The protein is Large ribosomal subunit protein uL13 of Pyrobaculum islandicum (strain DSM 4184 / JCM 9189 / GEO3).